The chain runs to 271 residues: Aminoglycoside 3'-phosphotransferase (271 aa).

The Proton acceptor role is filled by D198.

The protein belongs to the aminoglycoside phosphotransferase family.

The enzyme catalyses kanamycin A + ATP = kanamycin 3'-phosphate + ADP + H(+). Its function is as follows. Resistance to kanamycin and structurally-related aminoglycosides, including amikacin. This is Aminoglycoside 3'-phosphotransferase from Salmonella typhimurium.